Consider the following 691-residue polypeptide: Dynamin-1-like protein (691 aa).

In terms of domain architecture, Dynamin-type G spans 22-301; the sequence is IIQLPQIAVV…LMHHIRDCLP (280 aa). The segment at 32–39 is G1 motif; that stretch reads GTQSSGKS. A GTP-binding site is contributed by 32–40; that stretch reads GTQSSGKSS. The segment at 58–60 is G2 motif; sequence VTR. The segment at 145–148 is G3 motif; the sequence is DLPG. A G4 motif region spans residues 214–217; the sequence is TKLD. Residues 214–220 and 245–248 each bind GTP; these read TKLDLMD and NRSQ. The tract at residues 244–247 is G5 motif; it reads VNRS. The segment at 343-488 is middle domain; sequence YCNTIEGTAK…NEMVHNLVAI (146 aa). Composition is skewed to basic and acidic residues over residues 522 to 531 and 551 to 563; these read LPTSVPRDKM and KKGDEGQGEEKTK. A disordered region spans residues 522–573; that stretch reads LPTSVPRDKMAGGAQAEQEGGTGTWRGMLKKGDEGQGEEKTKLQSSIPASPQ. The 92-residue stretch at 599–690 folds into the GED domain; that stretch reads CEVIERLIKS…VIAEIRETHL (92 aa). Positions 609-623 are important for homodimerization; it reads YFLIVRKNIQDSVPK.

The protein belongs to the TRAFAC class dynamin-like GTPase superfamily. Dynamin/Fzo/YdjA family. In terms of assembly, homotetramer; dimerizes through the N-terminal GTP-middle region of one molecule binding to the GED domain of another DNM1L molecule. Oligomerizes in a GTP-dependent manner to form membrane-associated tubules with a spiral pattern.

The protein resides in the cytoplasm. Its subcellular location is the cytosol. The protein localises to the golgi apparatus. It is found in the endomembrane system. It localises to the mitochondrion outer membrane. The protein resides in the peroxisome. Its subcellular location is the membrane. The protein localises to the clathrin-coated pit. It is found in the cytoplasmic vesicle. It localises to the secretory vesicle. The protein resides in the synaptic vesicle membrane. It carries out the reaction GTP + H2O = GDP + phosphate + H(+). Functionally, functions in mitochondrial and peroxisomal division. Mediates membrane fission through oligomerization into membrane-associated tubular structures that wrap around the scission site to constrict and sever the mitochondrial membrane through a GTP hydrolysis-dependent mechanism. The specific recruitment at scission sites is mediated by membrane receptors like MFF, MIEF1 and MIEF2 for mitochondrial membranes. While the recruitment by the membrane receptors is GTP-dependent, the following hydrolysis of GTP induces the dissociation from the receptors and allows DNM1L filaments to curl into closed rings that are probably sufficient to sever a double membrane. May play a role in the circadian control of mitochondrial ATP production. In Danio rerio (Zebrafish), this protein is Dynamin-1-like protein.